The following is a 185-amino-acid chain: ATP synthase subunit delta (185 aa).

This sequence belongs to the ATPase delta chain family. As to quaternary structure, F-type ATPases have 2 components, F(1) - the catalytic core - and F(0) - the membrane proton channel. F(1) has five subunits: alpha(3), beta(3), gamma(1), delta(1), epsilon(1). CF(0) has four main subunits: a(1), b(2) and c(10-14). The alpha and beta chains form an alternating ring which encloses part of the gamma chain. F(1) is attached to F(0) by a central stalk formed by the gamma and epsilon chains, while a peripheral stalk is formed by the delta and b chains.

The protein localises to the cell membrane. Functionally, f(1)F(0) ATP synthase produces ATP from ADP in the presence of a proton or sodium gradient. F-type ATPases consist of two structural domains, F(1) containing the extramembraneous catalytic core and F(0) containing the membrane proton channel, linked together by a central stalk and a peripheral stalk. During catalysis, ATP synthesis in the catalytic domain of F(1) is coupled via a rotary mechanism of the central stalk subunits to proton translocation. This protein is part of the stalk that links CF(0) to CF(1). It either transmits conformational changes from CF(0) to CF(1) or is implicated in proton conduction. The sequence is that of ATP synthase subunit delta from Heliobacterium modesticaldum (strain ATCC 51547 / Ice1).